Consider the following 290-residue polypeptide: Cilia- and flagella-associated protein 298 (290 aa).

This sequence belongs to the CFAP298 family. As to quaternary structure, interacts with dnaaf1/swt. Interacts with lrrc6/sea. Interacts with dvl (via DEP and PDZ domains). As to expression, strongly expressed in ciliated tissues of the embryonic trunk, including the pronephric ducts and spinal canal.

Its subcellular location is the cytoplasm. It is found in the cytoskeleton. The protein resides in the cilium basal body. Its function is as follows. Plays a role in motile cilium function, possibly by acting on outer dynein arm assembly. Seems to be important for initiation rather than maintenance of cilium motility. Required for correct positioning of cilia at the apical cell surface, suggesting an additional role in the planar cell polarity (PCP) pathway. May suppress canonical Wnt signaling activity. In Danio rerio (Zebrafish), this protein is Cilia- and flagella-associated protein 298.